The sequence spans 146 residues: Hemoglobin subunit beta (146 aa).

At V1 the chain carries N-acetylvaline; partial. The Globin domain occupies 2–146 (HLTDAEKAAV…VANALAHKYH (145 aa)). The residue at position 12 (T12) is a Phosphothreonine. N6-acetyllysine is present on K59. H63 serves as a coordination point for heme b. K82 carries the post-translational modification N6-acetyllysine. H92 contacts heme b. C93 is modified (S-nitrosocysteine). K144 carries the N6-acetyllysine modification.

This sequence belongs to the globin family. As to quaternary structure, heterotetramer of two alpha chains and two beta chains. In terms of tissue distribution, red blood cells.

Functionally, involved in oxygen transport from the lung to the various peripheral tissues. In Procavia capensis habessinica (Abyssinian hyrax), this protein is Hemoglobin subunit beta (HBB).